Reading from the N-terminus, the 127-residue chain is MRKIPIIAGVFSLLITSCTFAASLQDDMNILIANLGIVSSSTDTKVITSSLEKMRNAALDAQKAIPPKLEGKAEDSPEIKDYRHGFDLLIEQIDKTKQWAEEGNIQEVKKSVGEVINIRNTYHSRYR.

Positions 1–21 (MRKIPIIAGVFSLLITSCTFA) are cleaved as a signal peptide. Heme b contacts are provided by methionine 28 and histidine 123.

Belongs to the cytochrome b562 family. Heme b serves as cofactor.

Its subcellular location is the periplasm. Its function is as follows. Electron-transport protein of unknown function. The polypeptide is Probable soluble cytochrome b562 1 (cybC1) (Yersinia pestis).